The following is a 258-amino-acid chain: Glutamate racemase (258 aa).

Substrate-binding positions include Asp12 to Ser13 and Tyr44 to Gly45. Cys75 functions as the Proton donor/acceptor in the catalytic mechanism. Substrate is bound at residue Asn76 to Thr77. Cys186 (proton donor/acceptor) is an active-site residue. Residue Thr187–His188 participates in substrate binding.

This sequence belongs to the aspartate/glutamate racemases family.

It carries out the reaction L-glutamate = D-glutamate. It participates in cell wall biogenesis; peptidoglycan biosynthesis. In terms of biological role, provides the (R)-glutamate required for cell wall biosynthesis. This Clostridium botulinum (strain Alaska E43 / Type E3) protein is Glutamate racemase.